The chain runs to 561 residues: Oxygen-dependent choline dehydrogenase (561 aa).

6–35 (DYIIIGAGSAGNVLATRLTEDADVSVLLLE) provides a ligand contact to FAD. Residue histidine 475 is the Proton acceptor of the active site.

The protein belongs to the GMC oxidoreductase family. FAD serves as cofactor.

It carries out the reaction choline + A = betaine aldehyde + AH2. It catalyses the reaction betaine aldehyde + NAD(+) + H2O = glycine betaine + NADH + 2 H(+). The protein operates within amine and polyamine biosynthesis; betaine biosynthesis via choline pathway; betaine aldehyde from choline (cytochrome c reductase route): step 1/1. Involved in the biosynthesis of the osmoprotectant glycine betaine. Catalyzes the oxidation of choline to betaine aldehyde and betaine aldehyde to glycine betaine at the same rate. This chain is Oxygen-dependent choline dehydrogenase, found in Pseudomonas aeruginosa (strain LESB58).